Consider the following 213-residue polypeptide: Probable nicotinate-nucleotide adenylyltransferase (213 aa).

This sequence belongs to the NadD family.

It carries out the reaction nicotinate beta-D-ribonucleotide + ATP + H(+) = deamido-NAD(+) + diphosphate. The protein operates within cofactor biosynthesis; NAD(+) biosynthesis; deamido-NAD(+) from nicotinate D-ribonucleotide: step 1/1. Functionally, catalyzes the reversible adenylation of nicotinate mononucleotide (NaMN) to nicotinic acid adenine dinucleotide (NaAD). This is Probable nicotinate-nucleotide adenylyltransferase from Ruegeria pomeroyi (strain ATCC 700808 / DSM 15171 / DSS-3) (Silicibacter pomeroyi).